Consider the following 395-residue polypeptide: Tryptophan--tRNA ligase (395 aa).

Residues 8–10 (RPT) and 16–17 (GH) each bind ATP. Residues 9-17 (PTGKLHLGH) carry the 'HIGH' region motif. Residues 117–179 (RLTDLEKEFK…EIEPEILKRL (63 aa)) form an insert region. Asp-204 contributes to the L-tryptophan binding site. Residues 216 to 218 (GED), Ile-254, and 261 to 265 (KMSKS) contribute to the ATP site. The 'KMSKS' region signature appears at 261-265 (KMSKS).

Belongs to the class-I aminoacyl-tRNA synthetase family. As to quaternary structure, homodimer.

It is found in the cytoplasm. It carries out the reaction tRNA(Trp) + L-tryptophan + ATP = L-tryptophyl-tRNA(Trp) + AMP + diphosphate + H(+). In terms of biological role, catalyzes the attachment of tryptophan to tRNA(Trp). This chain is Tryptophan--tRNA ligase, found in Aquifex aeolicus (strain VF5).